The following is a 245-amino-acid chain: 1-(5-phosphoribosyl)-5-[(5-phosphoribosylamino)methylideneamino] imidazole-4-carboxamide isomerase (245 aa).

Residue Asp7 is the Proton acceptor of the active site. Asp129 (proton donor) is an active-site residue.

Belongs to the HisA/HisF family.

Its subcellular location is the cytoplasm. The enzyme catalyses 1-(5-phospho-beta-D-ribosyl)-5-[(5-phospho-beta-D-ribosylamino)methylideneamino]imidazole-4-carboxamide = 5-[(5-phospho-1-deoxy-D-ribulos-1-ylimino)methylamino]-1-(5-phospho-beta-D-ribosyl)imidazole-4-carboxamide. It participates in amino-acid biosynthesis; L-histidine biosynthesis; L-histidine from 5-phospho-alpha-D-ribose 1-diphosphate: step 4/9. The polypeptide is 1-(5-phosphoribosyl)-5-[(5-phosphoribosylamino)methylideneamino] imidazole-4-carboxamide isomerase (Alteromonas mediterranea (strain DSM 17117 / CIP 110805 / LMG 28347 / Deep ecotype)).